Reading from the N-terminus, the 131-residue chain is Profilin-9 (131 aa).

A disulfide bridge links cysteine 13 with cysteine 115. Residues 81 to 97 carry the Involved in PIP2 interaction motif; it reads AVIRGKKGSGGITVKKT. Phosphothreonine is present on threonine 111.

Belongs to the profilin family. In terms of assembly, occurs in many kinds of cells as a complex with monomeric actin in a 1:1 ratio. Phosphorylated by MAP kinases.

The protein resides in the cytoplasm. Its subcellular location is the cytoskeleton. Functionally, binds to actin and affects the structure of the cytoskeleton. At high concentrations, profilin prevents the polymerization of actin, whereas it enhances it at low concentrations. This Zea mays (Maize) protein is Profilin-9.